The primary structure comprises 474 residues: Selection and upkeep of intraepithelial T-cells protein 4 (474 aa).

An N-terminal signal peptide occupies residues 1 to 25 (MGATEVLTSYCVVLCLLQMVALSSG). At 26 to 241 (HFTVIGSQRP…VLSGELFSWK (216 aa)) the chain is on the extracellular side. An Ig-like V-type domain is found at 27–140 (FTVIGSQRPI…EEHITEVKVT (114 aa)). Intrachain disulfides connect C48–C122 and C162–C216. Residues N111 and N199 are each glycosylated (N-linked (GlcNAc...) asparagine). Residues 141-234 (ATSSDIQILM…QEQSINIVLS (94 aa)) form the Ig-like C1-type domain. Residues 242–262 (IVWIMILSTISFVMIDFCMTY) traverse the membrane as a helical segment. The Cytoplasmic segment spans residues 263-298 (CVQQQLIHEESLSTVDNDQCESDQSEGTCYKRNYPW). The helical transmembrane segment at 299–319 (IIIAVVPIISVFAIIGVMLFL) threads the bilayer. The Extracellular portion of the chain corresponds to 320–341 (HLEQRVTILEQHFELDTLWLED). The chain crosses the membrane as a helical span at residues 342-362 (ISVILCVVIVSNINLIPLIYF). Residues 363–381 (RLHEHVPRFKDRSPILNKA) lie on the Cytoplasmic side of the membrane. A helical membrane pass occupies residues 382 to 402 (VVFLHFIYFSIVCGTILLVHL). Over 403–420 (QLRNKVSISDSLFSLYNS) the chain is Extracellular. The helical transmembrane segment at 421-441 (WLTDISMILGFLLSIFIVTTI) threads the bilayer. The Cytoplasmic portion of the chain corresponds to 442 to 474 (AKSSLFNKKWCIGLCIHMKEAEATGGPCEGEEL).

Belongs to the SKINT family. In terms of tissue distribution, expressed in skin, thymus and, to a lower extent, bladder and testis.

The protein localises to the membrane. Functionally, may act by engaging a cell surface molecule on immature T-cells in the embryonic thymus. The polypeptide is Selection and upkeep of intraepithelial T-cells protein 4 (Skint4) (Mus musculus (Mouse)).